Consider the following 945-residue polypeptide: 26S proteasome regulatory subunit RPN2 (945 aa).

Serine 2 is modified (N-acetylserine). 10 PC repeats span residues 366 to 399 (TATASLGVIHKGNLLEGKKVMAPYLPGSRASSRF), 403 to 440 (GSLYGLGLIYAGFGRDTTDYLKNIIVENSGTSGDEDVD), 445 to 479 (GASLGIGLAAMGSANIEVYEALKEVLYNDSATSGE), 480 to 514 (AAALGMGLCMLGTGKPEAIHDMFTYSQETQHGNIT), 516 to 549 (GLAVGLALINYGRQELADDLITKMLASDESLLRY), 550 to 585 (GGAFTIALAYAGTGNNSAVKRLLHVAVSDSNDDVRR), 586 to 618 (AAVIALGFVLLRDYTTVPRIVQLLSKSHNAHVR), 620 to 654 (GTAFALGIACAGKGLQSAIDVLDPLTKDPVDFVRQ), 655 to 692 (AAMIALSMILIQQTEKLNPQVADINKNFLSVITNKHQE), and 698 to 734 (GACVAQGIMNAGGRNVTIQLENADTGTLDTKSVVGLV). The residue at position 801 (threonine 801) is a Phosphothreonine. Basic residues predominate over residues 810–819 (AKARAKKTKK). The disordered stretch occupies residues 810-851 (AKARAKKTKKEKGPNEEEKKKEHEEKEKERETNKKGIKETKE). Positions 820 to 851 (EKGPNEEEKKKEHEEKEKERETNKKGIKETKE) are enriched in basic and acidic residues. Threonine 932 carries the phosphothreonine modification.

Belongs to the proteasome subunit S1 family. Interacts with UBR1. In terms of processing, N-acetylated by NAT1.

In terms of biological role, acts as a regulatory subunit of the 26S proteasome which is involved in the ATP-dependent degradation of ubiquitinated proteins. The sequence is that of 26S proteasome regulatory subunit RPN2 (RPN2) from Saccharomyces cerevisiae (strain ATCC 204508 / S288c) (Baker's yeast).